We begin with the raw amino-acid sequence, 303 residues long: Bidirectional sugar transporter SWEET14 (303 aa).

The Extracellular segment spans residues 1–9 (MAGMSLQHP). The chain crosses the membrane as a helical span at residues 10 to 30 (WAFAFGLLGNIISFMTYLAPL). One can recognise a MtN3/slv 1 domain in the interval 13-98 (AFGLLGNIIS…AVYLVYAPKK (86 aa)). Residues 31-44 (PTFYRIYKSKSTQG) are Cytoplasmic-facing. The helical transmembrane segment at 45-65 (FQSVPYVVALFSAMLWIYYAL) threads the bilayer. The Extracellular portion of the chain corresponds to 66–72 (LKSDECL). The helical transmembrane segment at 73-93 (LITINSAGCVIETIYIAVYLV) threads the bilayer. Over 94–105 (YAPKKAKMFTAK) the chain is Cytoplasmic. Residues 106-126 (LLLLVNVGVFGLILLLTLLLS) form a helical membrane-spanning segment. Residues 127–133 (AGDRRIV) lie on the Extracellular side of the membrane. Residues 134-154 (VLGWVCVGFSVSVFVAPLSII) traverse the membrane as a helical segment. The 84-residue stretch at 134–217 (VLGWVCVGFS…MGLYAMYRNS (84 aa)) folds into the MtN3/slv 2 domain. Topologically, residues 155-167 (RLVVRTKSVEFMP) are cytoplasmic. A helical membrane pass occupies residues 168 to 188 (FSLSFSLTISAVVWFLYGLLI). The Extracellular portion of the chain corresponds to 189 to 192 (KDKY). Residues 193–213 (VALPNVLGFSFGVIQMGLYAM) traverse the membrane as a helical segment. Topologically, residues 214–303 (YRNSTPKAVL…AGAGEKKVAA (90 aa)) are cytoplasmic. The interval 266–290 (HPVDVESPPAEAPPEEDDKAAAATA) is disordered.

The protein belongs to the SWEET sugar transporter family. As to quaternary structure, forms homooligomers and/or heterooligomers.

It localises to the cell membrane. Functionally, mediates both low-affinity uptake and efflux of sugar across the plasma membrane. Its function is as follows. Confers blight susceptibility. Confers TAL effector-mediated susceptibility to Xanthomonas oryzae pv. oryzae. The protein is Bidirectional sugar transporter SWEET14 (SWEET14) of Oryza sativa subsp. japonica (Rice).